The chain runs to 356 residues: MKIQDFDFDLPPELIAQFPAEKRGNSRMLHLDATSGALQDRMFADLPSYLRPGDVIVFNDTRVIKARLYGVRDTGGRVEVLVERVLDSHCALAAIRASHSPKPGSKLFLAGAIEVTVLSREHGFYILQFEHESGVMELLERYGNLPLPPYISRPVEKSDELRYQTVYAARPGAVAAPTAGLHFDEHMLGLLRKMGVVMAHVTLHVGSGTFQPVRVENIADHRMHSEVFYVSAETVECIRHAKAEGGRVLAVGTTSLRALEAAAAFAGERAEADNGDGVRIKCGAGETDIFITPGYQFRVVDCLLTNFHLPRSTLLMLVSAFGGVENIRCAYRHAIKERYRFFSFGDAMLIGRAEGI.

Belongs to the QueA family. In terms of assembly, monomer.

The protein resides in the cytoplasm. It carries out the reaction 7-aminomethyl-7-carbaguanosine(34) in tRNA + S-adenosyl-L-methionine = epoxyqueuosine(34) in tRNA + adenine + L-methionine + 2 H(+). The protein operates within tRNA modification; tRNA-queuosine biosynthesis. Its function is as follows. Transfers and isomerizes the ribose moiety from AdoMet to the 7-aminomethyl group of 7-deazaguanine (preQ1-tRNA) to give epoxyqueuosine (oQ-tRNA). This is S-adenosylmethionine:tRNA ribosyltransferase-isomerase from Nitrosospira multiformis (strain ATCC 25196 / NCIMB 11849 / C 71).